Reading from the N-terminus, the 582-residue chain is METRPPAAPAKLSYGIRRGGWTRIGAATVAAGKKAAGDLDPRHHHHRVTHGGDGGGVGGGGSGGQEEADEQQQQQHDHHRLLQLHHHQGVQQDQEPPPVPVFHLQPASVRQLSGSSAEYALLSPMGDAGGHSHHHQHGFQPQLLSFGGVGHHHHLHQFTAQPQPPAASHTRGRGGGGEIVPATTTPRSRGGGGGGGGEIVAVQGGHIVRSTGRKDRHSKVCTARGPRDRRVRLSAHTAIQFYDVQDRLGYDRPSKAVDWLIKNAKDAIDKLDVLPAWQPTAGGAGAGNAAAPPSSSTHPDSAENSDDQAQAITVAHTAFDFAGGGSGGTSFLPPSLDSDAIADTIKSFFPMGGTAGGEASSSTTAAQSSAMGFQSYTPDLLSRTGSQSQELRLSLQSLPDPMFHHQQHRHGGGGGGGNGTTQQALFSGAANYSFGGGAMWATEQQAQNQRMLPWNVPDPGGGGGAAYLFNVSQQAAHMQAAAAALGGHQSQFFFQRGPLQSSNQPSERGWPETVEADNQMSHHQGGLSPSVSAAIGFAAPGIGFSGFRLPARIQGDEEHNGGGGGNGDKPPPPSSVSSASHH.

Disordered regions lie at residues 30–78 (AAGK…QHDH) and 123–195 (SPMG…GGGG). Gly residues predominate over residues 51 to 64 (GGDGGGVGGGGSGG). Residues 213-271 (RKDRHSKVCTARGPRDRRVRLSAHTAIQFYDVQDRLGYDRPSKAVDWLIKNAKDAIDKL) form the TCP domain. Disordered stretches follow at residues 283-306 (GAGA…ENSD), 402-423 (MFHH…TTQQ), and 548-582 (RLPA…ASHH).

Forms homodimers and heterodimers with PCF2.

The protein resides in the nucleus. Functionally, transcription activator. Binds the promoter core sequence 5'-GGNCC-3'. The sequence is that of Transcription factor PCF5 (PCF5) from Oryza sativa subsp. indica (Rice).